Consider the following 202-residue polypeptide: Dual-action ribosomal maturation protein DarP (202 aa).

A compositionally biased stretch (low complexity) spans 1-13 (MPPMTRNTRNNPN). The interval 1–39 (MPPMTRNTRNNPNGRFPGAFAPEDEDDLPKSKSQRKRDM) is disordered.

It belongs to the DarP family.

The protein resides in the cytoplasm. In terms of biological role, member of a network of 50S ribosomal subunit biogenesis factors which assembles along the 30S-50S interface, preventing incorrect 23S rRNA structures from forming. Promotes peptidyl transferase center (PTC) maturation. This Cupriavidus metallidurans (strain ATCC 43123 / DSM 2839 / NBRC 102507 / CH34) (Ralstonia metallidurans) protein is Dual-action ribosomal maturation protein DarP.